The chain runs to 342 residues: Anthranilate phosphoribosyltransferase (342 aa).

5-phospho-alpha-D-ribose 1-diphosphate contacts are provided by residues glycine 74, 77-78 (GD), threonine 82, 84-87 (NVST), 101-109 (KHGNRSVSG), and serine 113. Position 74 (glycine 74) interacts with anthranilate. Serine 86 contacts Mg(2+). Residue asparagine 104 participates in anthranilate binding. Arginine 159 contacts anthranilate. 2 residues coordinate Mg(2+): aspartate 218 and glutamate 219.

Belongs to the anthranilate phosphoribosyltransferase family. Homodimer. Mg(2+) is required as a cofactor.

The catalysed reaction is N-(5-phospho-beta-D-ribosyl)anthranilate + diphosphate = 5-phospho-alpha-D-ribose 1-diphosphate + anthranilate. It functions in the pathway amino-acid biosynthesis; L-tryptophan biosynthesis; L-tryptophan from chorismate: step 2/5. Its function is as follows. Catalyzes the transfer of the phosphoribosyl group of 5-phosphorylribose-1-pyrophosphate (PRPP) to anthranilate to yield N-(5'-phosphoribosyl)-anthranilate (PRA). The sequence is that of Anthranilate phosphoribosyltransferase from Sulfolobus acidocaldarius (strain ATCC 33909 / DSM 639 / JCM 8929 / NBRC 15157 / NCIMB 11770).